The following is a 637-amino-acid chain: MSQQETHGFQTEVKQLLHLMIHSLYSNKEIFLRELVSNAADAADKLRYLALTNDALYEGDGELRVRISADKEKGTVTIEDNGVGMTRDGVIEHLGTIAKSGTAEFFKNLSGEASKDSQLIGQFGVGFYSAFIVAKKVTVRTRAAGHKANEAVLWESEGEGSFTVDTITKASRGTEITLHLRDEEKEFADEWRLRSIITKYSDHISVPVEMWQEGTPERDGPDGEKIPATEGYWKVMNKATALWMRNKSEISDEEYQEFYKHISHDYTDALLWSHNRVEGKQEYTNLLYIPSKAPWDLWNRDRKHGLKLFVQRVFIMDDAEQFMPSYLRFVQGLIDSNDLPLNVSREILQDNHITKAMRTGITKRVLGMLEKLAKDDAEKYQQFWAEFGQVLKEGPAEDFANRERIAGLLRFASTHTGSAAPTVSLDDYLSRMKEGQNKIYYIVADSHEAAANSPHLELLRKKGIEVLLMSERIDEWLINHLTEYKEKQLHSVTRGELELGELEDAAEKEAQEKLAEESAPLIERIKAALGASVADVKVTSRLTDTPACVVTGEGEMSSQMIKLMQAAGQPVPEVKPTFEVNPAHPLVSRLNDLQDEAAFADWSNLLLQQAQLSEKGSLADPSAFIKLMNQMLLANLK.

The interval 1-345 is a; substrate-binding; sequence MSQQETHGFQ…SNDLPLNVSR (345 aa). The b stretch occupies residues 346 to 562; sequence EILQDNHITK…EGEMSSQMIK (217 aa). The segment at 563–637 is c; it reads LMQAAGQPVP…MNQMLLANLK (75 aa).

It belongs to the heat shock protein 90 family. Homodimer.

The protein resides in the cytoplasm. In terms of biological role, molecular chaperone. Has ATPase activity. The protein is Chaperone protein HtpG of Shewanella sp. (strain ANA-3).